The chain runs to 700 residues: DNA topoisomerase 1 (700 aa).

The region spanning 3–114 is the Toprim domain; sequence KNLIIVESPA…TLPRIVFHEI (112 aa). Residues E9 and D83 each coordinate Mg(2+). Positions 130–553 constitute a Topo IA-type catalytic domain; that stretch reads NMHSVNAQQT…EFYYPFMRKI (424 aa). An interaction with DNA region spans residues 164-169; the sequence is SAGRVQ. Y298 acts as the O-(5'-phospho-DNA)-tyrosine intermediate in catalysis. 3 consecutive C4-type zinc fingers follow at residues 573–599, 629–656, and 669–692; these read CPDC…FPKC, CPSC…YPKC, and CEEC…CLKC.

Belongs to the type IA topoisomerase family. Monomer. Mg(2+) is required as a cofactor.

The catalysed reaction is ATP-independent breakage of single-stranded DNA, followed by passage and rejoining.. Functionally, releases the supercoiling and torsional tension of DNA, which is introduced during the DNA replication and transcription, by transiently cleaving and rejoining one strand of the DNA duplex. Introduces a single-strand break via transesterification at a target site in duplex DNA. The scissile phosphodiester is attacked by the catalytic tyrosine of the enzyme, resulting in the formation of a DNA-(5'-phosphotyrosyl)-enzyme intermediate and the expulsion of a 3'-OH DNA strand. The free DNA strand then undergoes passage around the unbroken strand, thus removing DNA supercoils. Finally, in the religation step, the DNA 3'-OH attacks the covalent intermediate to expel the active-site tyrosine and restore the DNA phosphodiester backbone. In Campylobacter jejuni subsp. jejuni serotype O:2 (strain ATCC 700819 / NCTC 11168), this protein is DNA topoisomerase 1.